The following is a 252-amino-acid chain: uncharacterized protein (252 aa).

2 stretches are compositionally biased toward polar residues: residues 108 to 122 (RTTM…SSSE) and 136 to 153 (MPNT…NSQS). Residues 108–252 (RTTMRQGRFP…LIWNDSSSSK (145 aa)) are disordered. Over residues 154-172 (TEKEDAMYSKDNGFEDRSK) the composition is skewed to basic and acidic residues. Positions 201-226 (VKSTDSAFSGQENSEAFPSRTSNLGS) are enriched in polar residues.

It is found in the cytoplasm. It localises to the mitochondrion. The protein localises to the nucleus. This is an uncharacterized protein from Schizosaccharomyces pombe (strain 972 / ATCC 24843) (Fission yeast).